The primary structure comprises 367 residues: MGSNSFGRLFTVTTFGESHGPAIGCIIDGCPPGLEIAPEEFTHDLQRRATGKSRHTSARREADEIEILSGVYEGRTTGTPIGLLIRNTDQRSKDYTNIAQQFRPGHADYTYWQKYGIRDPRGGGRSSARETTMRVAAGVIAKKWLKQRYGVLVRGFLSQLGEIRPTGFDWDAVEDNPFFWPHAAQVPELETYMDALRKSGDSVGARVDVVAGGVPPGWGEPIYGKLDSELAAALMSINAVKGVEIGDGFASAAQKGTEHRDLITPEGFLSNHAGGILGGISTGQAVTASMVLKPTSSLRLPGATVDADGAVVDVITTGRHDPCVGIRATPIAEAMMALVLMDQALRHRAQCGDVGEVSPLIPGQADV.

The NADP(+) site is built by Arg48 and Arg54. FMN contacts are provided by residues 125–127, 238–239, Gly278, 293–297, and Arg319; these read RSS, NA, and KPTSS.

The protein belongs to the chorismate synthase family. Homotetramer. It depends on FMNH2 as a cofactor.

The catalysed reaction is 5-O-(1-carboxyvinyl)-3-phosphoshikimate = chorismate + phosphate. It functions in the pathway metabolic intermediate biosynthesis; chorismate biosynthesis; chorismate from D-erythrose 4-phosphate and phosphoenolpyruvate: step 7/7. Its function is as follows. Catalyzes the anti-1,4-elimination of the C-3 phosphate and the C-6 proR hydrogen from 5-enolpyruvylshikimate-3-phosphate (EPSP) to yield chorismate, which is the branch point compound that serves as the starting substrate for the three terminal pathways of aromatic amino acid biosynthesis. This reaction introduces a second double bond into the aromatic ring system. In Xanthomonas campestris pv. campestris (strain B100), this protein is Chorismate synthase.